A 220-amino-acid chain; its full sequence is Ribosomal RNA small subunit methyltransferase J (220 aa).

Residues 55–56 (RD), 71–72 (ER), and aspartate 123 each bind S-adenosyl-L-methionine.

The protein belongs to the methyltransferase superfamily. RsmJ family.

Its subcellular location is the cytoplasm. The catalysed reaction is guanosine(1516) in 16S rRNA + S-adenosyl-L-methionine = N(2)-methylguanosine(1516) in 16S rRNA + S-adenosyl-L-homocysteine + H(+). In terms of biological role, specifically methylates the guanosine in position 1516 of 16S rRNA. The protein is Ribosomal RNA small subunit methyltransferase J of Rhodopseudomonas palustris (strain BisB5).